The following is a 596-amino-acid chain: Aspartate--tRNA(Asp/Asn) ligase (596 aa).

Glu-172 lines the L-aspartate pocket. An aspartate region spans residues 196–199; the sequence is QLFK. Arg-218 contacts L-aspartate. Residues 218-220 and Gln-227 each bind ATP; that span reads RDE. His-450 is an L-aspartate binding site. Glu-484 contacts ATP. Residue Arg-491 coordinates L-aspartate. 536–539 is an ATP binding site; it reads GLDR.

The protein belongs to the class-II aminoacyl-tRNA synthetase family. Type 1 subfamily. In terms of assembly, homodimer.

The protein localises to the cytoplasm. The catalysed reaction is tRNA(Asx) + L-aspartate + ATP = L-aspartyl-tRNA(Asx) + AMP + diphosphate. Aspartyl-tRNA synthetase with relaxed tRNA specificity since it is able to aspartylate not only its cognate tRNA(Asp) but also tRNA(Asn). Reaction proceeds in two steps: L-aspartate is first activated by ATP to form Asp-AMP and then transferred to the acceptor end of tRNA(Asp/Asn). The chain is Aspartate--tRNA(Asp/Asn) ligase from Acidithiobacillus ferrooxidans (strain ATCC 23270 / DSM 14882 / CIP 104768 / NCIMB 8455) (Ferrobacillus ferrooxidans (strain ATCC 23270)).